Consider the following 246-residue polypeptide: Bromelain inhibitor (246 aa).

An N-terminal signal peptide occupies residues 1–19 (MNMLLLFLHEVINGERVTL). 5 disulfide bridges follow: C22–C42, C25–C74, C27–C40, C49–C56, and C53–C65. A propeptide spanning residues 31 to 35 (TSSSD) is cleaved from the precursor. 2 consecutive propeptides follow at residues 77 to 95 (PVSS…RVTL) and 107 to 111 (TSSSD). Cystine bridges form between C98-C118, C101-C150, C103-C116, C125-C132, and C129-C141. 2 propeptides span residues 153–171 (PVSS…RVTL) and 183–187 (TSSSD). 5 cysteine pairs are disulfide-bonded: C174/C194, C177/C226, C179/C192, C201/C208, and C205/C217. Residues 229 to 246 (PVSSWEARQKIKLLQGRE) constitute a propeptide that is removed on maturation.

It belongs to the protease inhibitor I67 family. Each inhibitor is composed of two chains, designated A and B linked by three disulfide bonds.

Functionally, weak inhibitor of cysteine proteinases. This chain is Bromelain inhibitor, found in Ananas comosus (Pineapple).